Here is a 151-residue protein sequence, read N- to C-terminus: uncharacterized protein (151 aa).

2 BON domains span residues 2–68 and 78–146; these read DDAA…AVDK and IDSA…RLKH.

This is an uncharacterized protein from Anaplasma centrale.